The primary structure comprises 79 residues: Sulfur carrier protein TusA (79 aa).

C17 acts as the Cysteine persulfide intermediate in catalysis.

This sequence belongs to the sulfur carrier protein TusA family.

The protein resides in the cytoplasm. Functionally, sulfur carrier protein which probably makes part of a sulfur-relay system. In Actinobacillus succinogenes (strain ATCC 55618 / DSM 22257 / CCUG 43843 / 130Z), this protein is Sulfur carrier protein TusA.